The following is a 134-amino-acid chain: Protein Turandot E (134 aa).

Residues 1–38 (MSYTRTVHSSTSILKMNSALQISCLLVVLGCLLGSGHC) form the signal peptide.

It belongs to the Turandot family.

The protein resides in the secreted. In terms of biological role, a humoral factor that may play a role in stress tolerance. The polypeptide is Protein Turandot E (Drosophila simulans (Fruit fly)).